The following is a 246-amino-acid chain: Acetoacetate decarboxylase (246 aa).

Residue K116 is the Schiff-base intermediate with acetoacetate of the active site.

It belongs to the ADC family.

It carries out the reaction acetoacetate + H(+) = acetone + CO2. Functionally, catalyzes the conversion of acetoacetate to acetone and carbon dioxide. This Burkholderia multivorans (strain ATCC 17616 / 249) protein is Acetoacetate decarboxylase.